A 432-amino-acid chain; its full sequence is 3-phosphoshikimate 1-carboxyvinyltransferase (432 aa).

3-phosphoshikimate contacts are provided by K23, S24, and R28. K23 serves as a coordination point for phosphoenolpyruvate. The phosphoenolpyruvate site is built by G95 and R123. 4 residues coordinate 3-phosphoshikimate: S167, Q169, D317, and K344. Q169 provides a ligand contact to phosphoenolpyruvate. The active-site Proton acceptor is D317. 2 residues coordinate phosphoenolpyruvate: R348 and R390.

It belongs to the EPSP synthase family. In terms of assembly, monomer.

The protein localises to the cytoplasm. It carries out the reaction 3-phosphoshikimate + phosphoenolpyruvate = 5-O-(1-carboxyvinyl)-3-phosphoshikimate + phosphate. It functions in the pathway metabolic intermediate biosynthesis; chorismate biosynthesis; chorismate from D-erythrose 4-phosphate and phosphoenolpyruvate: step 6/7. Functionally, catalyzes the transfer of the enolpyruvyl moiety of phosphoenolpyruvate (PEP) to the 5-hydroxyl of shikimate-3-phosphate (S3P) to produce enolpyruvyl shikimate-3-phosphate and inorganic phosphate. In Staphylococcus saprophyticus subsp. saprophyticus (strain ATCC 15305 / DSM 20229 / NCIMB 8711 / NCTC 7292 / S-41), this protein is 3-phosphoshikimate 1-carboxyvinyltransferase.